The chain runs to 87 residues: Small ribosomal subunit protein uS17 (87 aa).

Belongs to the universal ribosomal protein uS17 family. Part of the 30S ribosomal subunit.

In terms of biological role, one of the primary rRNA binding proteins, it binds specifically to the 5'-end of 16S ribosomal RNA. The protein is Small ribosomal subunit protein uS17 of Bacillus thuringiensis (strain Al Hakam).